The primary structure comprises 74 residues: Cytochrome c oxidase subunit 3 (74 aa).

2 consecutive transmembrane segments (helical) span residues Ser-15 to His-37 and Ser-42 to Trp-59.

This sequence belongs to the cytochrome c oxidase subunit 3 family. As to quaternary structure, component of the cytochrome c oxidase (complex IV, CIV), a multisubunit enzyme composed of a catalytic core of 3 subunits and several supernumerary subunits. The complex exists as a monomer or a dimer and forms supercomplexes (SCs) in the inner mitochondrial membrane with ubiquinol-cytochrome c oxidoreductase (cytochrome b-c1 complex, complex III, CIII).

It localises to the mitochondrion inner membrane. It catalyses the reaction 4 Fe(II)-[cytochrome c] + O2 + 8 H(+)(in) = 4 Fe(III)-[cytochrome c] + 2 H2O + 4 H(+)(out). In terms of biological role, component of the cytochrome c oxidase, the last enzyme in the mitochondrial electron transport chain which drives oxidative phosphorylation. The respiratory chain contains 3 multisubunit complexes succinate dehydrogenase (complex II, CII), ubiquinol-cytochrome c oxidoreductase (cytochrome b-c1 complex, complex III, CIII) and cytochrome c oxidase (complex IV, CIV), that cooperate to transfer electrons derived from NADH and succinate to molecular oxygen, creating an electrochemical gradient over the inner membrane that drives transmembrane transport and the ATP synthase. Cytochrome c oxidase is the component of the respiratory chain that catalyzes the reduction of oxygen to water. Electrons originating from reduced cytochrome c in the intermembrane space (IMS) are transferred via the dinuclear copper A center (CU(A)) of subunit 2 and heme A of subunit 1 to the active site in subunit 1, a binuclear center (BNC) formed by heme A3 and copper B (CU(B)). The BNC reduces molecular oxygen to 2 water molecules using 4 electrons from cytochrome c in the IMS and 4 protons from the mitochondrial matrix. The sequence is that of Cytochrome c oxidase subunit 3 (mt:CoIII) from Drosophila simulans (Fruit fly).